The following is a 128-amino-acid chain: Flagellar basal body rod protein FlgB (128 aa).

The protein belongs to the flagella basal body rod proteins family. The basal body constitutes a major portion of the flagellar organelle and consists of a number of rings mounted on a central rod. In Gram-negative bacteria, at least four rings, L, P, S and M are present, whereas Gram-positive bacteria lack the L and P rings. The rod consists of about 26 subunits of FlgG in the distal portion, and FlgB, FlgC and FlgF build up the proximal portion of the rod with about 6 subunits each. Rod assembly occurs by export via the flagellum-specific pathway of its constituent proteins and by their incorporation into the rod structure in the probable order of FlgB, FlgC, FlgF and FlgG. Another protein, FliE, also assembles onto the stable rod structure.

Its subcellular location is the bacterial flagellum basal body. Functionally, structural component of flagellum, the bacterial motility apparatus. Part of the rod structure of flagellar basal body. This chain is Flagellar basal body rod protein FlgB, found in Cereibacter sphaeroides (Rhodobacter sphaeroides).